A 377-amino-acid chain; its full sequence is Terpene synthase 1 (377 aa).

The DDxx(x)D/E motif signature appears at 81–86; that stretch reads DDALDA. The NDxxSxxxD/E motif motif lies at 221–229; the sequence is NDLVSYEKE. Positions 326–359 are disordered; that stretch reads RKQSSSPNLTNSISIPTNNTNNSNNITSSPNKKQ. Residues 335-356 show a composition bias toward low complexity; that stretch reads TNSISIPTNNTNNSNNITSSPN.

Belongs to the terpene synthase family.

It catalyses the reaction (2E,6E)-farnesyl diphosphate = (2S,3R,6S,9S)-(-)-protoillud-7-ene + diphosphate. In terms of biological role, terpene synthase that converts its substrate farnesyl diphosphate (FPP) into the sesquiterpene protoillud-7-ene. The protein is Terpene synthase 1 of Dictyostelium purpureum (Slime mold).